Reading from the N-terminus, the 110-residue chain is MIVTTSPNIEGKQIIEYKKIVFGEVITGVNFMKDIGAGLRNFFGGRSQGYEDELINAREEAIREMEQRAKDIGANAVIGVDIDYEVLGADNGMLMVTASGTAVVIEAQDY.

It belongs to the UPF0145 family.

This is UPF0145 protein LMOf2365_0219 from Listeria monocytogenes serotype 4b (strain F2365).